Consider the following 113-residue polypeptide: U11-theraphotoxin-Hhn1j (113 aa).

Positions 1-21 (MNTVRVTFLLVFVLAVSLGQA) are cleaved as a signal peptide. Positions 22–74 (DKDENRMEMQEKTEQGKSYLDFAENLLLQKLEELEAKLLEEDSEESRNSRQKR) are excised as a propeptide. Residues 60–69 (LEEDSEESRN) show a composition bias toward basic and acidic residues. Residues 60-83 (LEEDSEESRNSRQKRCIGEGVPCD) are disordered. Cystine bridges form between Cys-75–Cys-90, Cys-82–Cys-95, and Cys-89–Cys-110.

Belongs to the neurotoxin 14 (magi-1) family. 01 (HNTX-16) subfamily. As to expression, expressed by the venom gland.

The protein localises to the secreted. Functionally, probable ion channel inhibitor. In Cyriopagopus hainanus (Chinese bird spider), this protein is U11-theraphotoxin-Hhn1j.